The following is a 740-amino-acid chain: Phosphoribosylformylglycinamidine synthase subunit PurL (740 aa).

Residue histidine 50 is part of the active site. ATP is bound by residues tyrosine 53 and lysine 92. Glutamate 94 is a binding site for Mg(2+). Substrate is bound by residues 95–98 and arginine 117; that span reads SHNH. Histidine 96 functions as the Proton acceptor in the catalytic mechanism. Aspartate 118 is a Mg(2+) binding site. Residue glutamine 241 participates in substrate binding. A Mg(2+)-binding site is contributed by aspartate 269. 313-315 contacts substrate; the sequence is ESQ. 2 residues coordinate ATP: aspartate 495 and glycine 532. Asparagine 533 provides a ligand contact to Mg(2+). Serine 535 contributes to the substrate binding site.

This sequence belongs to the FGAMS family. As to quaternary structure, monomer. Part of the FGAM synthase complex composed of 1 PurL, 1 PurQ and 2 PurS subunits.

It localises to the cytoplasm. The catalysed reaction is N(2)-formyl-N(1)-(5-phospho-beta-D-ribosyl)glycinamide + L-glutamine + ATP + H2O = 2-formamido-N(1)-(5-O-phospho-beta-D-ribosyl)acetamidine + L-glutamate + ADP + phosphate + H(+). It participates in purine metabolism; IMP biosynthesis via de novo pathway; 5-amino-1-(5-phospho-D-ribosyl)imidazole from N(2)-formyl-N(1)-(5-phospho-D-ribosyl)glycinamide: step 1/2. Part of the phosphoribosylformylglycinamidine synthase complex involved in the purines biosynthetic pathway. Catalyzes the ATP-dependent conversion of formylglycinamide ribonucleotide (FGAR) and glutamine to yield formylglycinamidine ribonucleotide (FGAM) and glutamate. The FGAM synthase complex is composed of three subunits. PurQ produces an ammonia molecule by converting glutamine to glutamate. PurL transfers the ammonia molecule to FGAR to form FGAM in an ATP-dependent manner. PurS interacts with PurQ and PurL and is thought to assist in the transfer of the ammonia molecule from PurQ to PurL. This chain is Phosphoribosylformylglycinamidine synthase subunit PurL, found in Brucella abortus (strain S19).